Consider the following 252-residue polypeptide: 3-dehydroquinate dehydratase (252 aa).

3-dehydroquinate contacts are provided by residues S21, 46–48 (EWR), and R82. H143 acts as the Proton donor/acceptor in catalysis. Residue K170 is the Schiff-base intermediate with substrate of the active site. 3-dehydroquinate-binding residues include R213, S232, and Q236.

Belongs to the type-I 3-dehydroquinase family. As to quaternary structure, homodimer.

The catalysed reaction is 3-dehydroquinate = 3-dehydroshikimate + H2O. It functions in the pathway metabolic intermediate biosynthesis; chorismate biosynthesis; chorismate from D-erythrose 4-phosphate and phosphoenolpyruvate: step 3/7. Its function is as follows. Involved in the third step of the chorismate pathway, which leads to the biosynthesis of aromatic amino acids. Catalyzes the cis-dehydration of 3-dehydroquinate (DHQ) and introduces the first double bond of the aromatic ring to yield 3-dehydroshikimate. The chain is 3-dehydroquinate dehydratase from Shigella flexneri serotype 5b (strain 8401).